We begin with the raw amino-acid sequence, 178 residues long: Small ribosomal subunit protein uS5 (178 aa).

The S5 DRBM domain maps to 15–78; the sequence is FEEKIIEIRR…SAAKRNIVEV (64 aa).

It belongs to the universal ribosomal protein uS5 family. Part of the 30S ribosomal subunit. Contacts proteins S4 and S8.

Its function is as follows. With S4 and S12 plays an important role in translational accuracy. In terms of biological role, located at the back of the 30S subunit body where it stabilizes the conformation of the head with respect to the body. The chain is Small ribosomal subunit protein uS5 from Thermotoga maritima (strain ATCC 43589 / DSM 3109 / JCM 10099 / NBRC 100826 / MSB8).